The sequence spans 204 residues: General stress protein Ctc (204 aa).

The interval 177–204 is disordered; it reads ILPPQQQEAAEVDEEESADAQPEGENEQ. Residues 186 to 204 are compositionally biased toward acidic residues; it reads AEVDEEESADAQPEGENEQ.

The protein belongs to the bacterial ribosomal protein bL25 family. CTC subfamily. As to quaternary structure, part of the ribosome (presumably the 50S subunit) under heat-stress but not control growth conditions. Binds 5S rRNA.

Not required for exponential growth; probably functions in vegetatively growing cells, maybe required for accurate translation under stress conditions. The sequence is that of General stress protein Ctc from Bacillus subtilis (strain 168).